The chain runs to 379 residues: Alternative oxidase 1, mitochondrial (379 aa).

Residues 33-50 (TTTTSTKSRSSTSTAATT) are compositionally biased toward low complexity. Residues 33 to 76 (TTTTSTKSRSSTSTAATTVGNSNPKSPIDEDNLEKPGTIPTKHK) are disordered. The Fe cation site is built by glutamate 180, glutamate 219, and histidine 222. A helical transmembrane segment spans residues 234–256 (WFTRSIIYIGQGVFTNIFFLVYL). Fe cation-binding residues include glutamate 270, glutamate 271, glutamate 326, and histidine 329.

The protein belongs to the alternative oxidase family. Fe cation serves as cofactor.

The protein localises to the mitochondrion inner membrane. Catalyzes cyanide-resistant oxygen consumption. May increase respiration when the cytochrome respiratory pathway is restricted, or in response to low temperatures. In Candida albicans (Yeast), this protein is Alternative oxidase 1, mitochondrial (AOX1).